The chain runs to 262 residues: Vibriobactin-specific 2,3-dihydro-2,3-dihydroxybenzoate dehydrogenase (262 aa).

Residue 12–36 coordinates NAD(+); sequence LLVGSARGIGFSVLEHLLQAGAQVM. A substrate-binding site is contributed by Ser-145. The Proton acceptor role is filled by Tyr-158.

This sequence belongs to the short-chain dehydrogenases/reductases (SDR) family.

The enzyme catalyses (2S,3S)-2,3-dihydroxy-2,3-dihydrobenzoate + NAD(+) = 2,3-dihydroxybenzoate + NADH + H(+). The protein operates within siderophore biosynthesis; vibriobactin biosynthesis. In terms of biological role, involved in an early step of the biosynthesis of the catechol siderophore vibriobactin. Vibriobactin is a chelating compound involved in transporting iron from the bacterial environment into the cell cytoplasm. The chain is Vibriobactin-specific 2,3-dihydro-2,3-dihydroxybenzoate dehydrogenase (vibA) from Vibrio cholerae serotype O1 (strain ATCC 39315 / El Tor Inaba N16961).